The sequence spans 398 residues: E3 ubiquitin-protein ligase RSL1 (398 aa).

The segment at 155 to 374 (QKETCNICLN…LDLTQCCGSC (220 aa)) is TRIAD supradomain. Zn(2+) contacts are provided by C159, C162, C183, C186, C246, C251, C271, C274, C279, C282, H287, C292, C321, and C324. The RING-type 3; degenerate zinc finger occupies 159–207 (CNICLNDDINADQMFSVDKSGHMCCSECVKRHIEVRLLEGSLITCPHYR). An RING-type 1 zinc finger spans residues 159–208 (CNICLNDDINADQMFSVDKSGHMCCSECVKRHIEVRLLEGSLITCPHYRC). An IBR-type zinc finger spans residues 233 to 292 (TKDELIPVMDRVYCPNPRCSTLMSETELSGLNIGVRRCCVKCGEPFCVKCKVSWHNNLSC). Residues 321-349 (CSKCKHMIELSSGCISVVCRCGHTFCYQC) form an RING-type 2; atypical zinc finger. The RING-type 4; degenerate zinc-finger motif lies at 321 to 356 (CSKCKHMIELSSGCISVVCRCGHTFCYQCGADAGDC). C334 is a catalytic residue. Residues C339, C341, C346, C349, H358, and C370 each contribute to the Zn(2+) site. The helical transmembrane segment at 374 to 394 (CCCFVFFLVIIAIVVTIILLV) threads the bilayer.

The protein belongs to the RBR family. Interacts with the PYL4 and PYR1 ABA receptors at the plasma membrane. Requires Zn(2+) as cofactor.

It localises to the cell membrane. Its subcellular location is the vacuole membrane. The catalysed reaction is [E2 ubiquitin-conjugating enzyme]-S-ubiquitinyl-L-cysteine + [acceptor protein]-L-lysine = [E2 ubiquitin-conjugating enzyme]-L-cysteine + [acceptor protein]-N(6)-ubiquitinyl-L-lysine.. It participates in protein modification; protein ubiquitination. Its function is as follows. Acts as an E3 ubiquitin-protein ligase, or as part of E3 complex, which accepts ubiquitin from specific E2 ubiquitin-conjugating enzymes and then transfers it to substrates. Negative regulator of the abscisic acid (ABA) signaling pathway which targets PYL4 and PYR1 ABA receptors in plasma membrane to promote their FREE1/FYVE1-dependent trafficking and degradation upon ubiquitynation; this process involves clathrin-mediated endocytosis and trafficking through the ESCRT pathway. Involved in the maintenance of seed longevity. May enhance gibberellins responses. The polypeptide is E3 ubiquitin-protein ligase RSL1 (Arabidopsis thaliana (Mouse-ear cress)).